A 39-amino-acid chain; its full sequence is Photosystem II reaction center protein J (39 aa).

The helical transmembrane segment at 7–27 (IPLWIVATVAGTGALVVVGLF) threads the bilayer.

The protein belongs to the PsbJ family. In terms of assembly, PSII is composed of 1 copy each of membrane proteins PsbA, PsbB, PsbC, PsbD, PsbE, PsbF, PsbH, PsbI, PsbJ, PsbK, PsbL, PsbM, PsbT, PsbX, PsbY, PsbZ, Psb30/Ycf12, peripheral proteins PsbO, CyanoQ (PsbQ), PsbU, PsbV and a large number of cofactors. It forms dimeric complexes.

The protein resides in the cellular thylakoid membrane. Its function is as follows. One of the components of the core complex of photosystem II (PSII). PSII is a light-driven water:plastoquinone oxidoreductase that uses light energy to abstract electrons from H(2)O, generating O(2) and a proton gradient subsequently used for ATP formation. It consists of a core antenna complex that captures photons, and an electron transfer chain that converts photonic excitation into a charge separation. The protein is Photosystem II reaction center protein J of Synechococcus sp. (strain ATCC 27144 / PCC 6301 / SAUG 1402/1) (Anacystis nidulans).